The following is a 168-amino-acid chain: G/U mismatch-specific DNA glycosylase (168 aa).

The protein belongs to the uracil-DNA glycosylase (UDG) superfamily. TDG/mug family. Binds DNA as a monomer.

It localises to the cytoplasm. It carries out the reaction Specifically hydrolyzes mismatched double-stranded DNA and polynucleotides, releasing free uracil.. Excises ethenocytosine and uracil, which can arise by alkylation or deamination of cytosine, respectively, from the corresponding mispairs with guanine in ds-DNA. It is capable of hydrolyzing the carbon-nitrogen bond between the sugar-phosphate backbone of the DNA and the mispaired base. The complementary strand guanine functions in substrate recognition. Required for DNA damage lesion repair in stationary-phase cells. The protein is G/U mismatch-specific DNA glycosylase of Salmonella dublin (strain CT_02021853).